Here is a 133-residue protein sequence, read N- to C-terminus: Aspartate 1-decarboxylase (133 aa).

The active-site Schiff-base intermediate with substrate; via pyruvic acid is the serine 26. Serine 26 bears the Pyruvic acid (Ser) mark. Threonine 58 provides a ligand contact to substrate. Catalysis depends on tyrosine 59, which acts as the Proton donor. 74–76 (GAA) serves as a coordination point for substrate.

It belongs to the PanD family. As to quaternary structure, heterooctamer of four alpha and four beta subunits. The cofactor is pyruvate. Post-translationally, is synthesized initially as an inactive proenzyme, which is activated by self-cleavage at a specific serine bond to produce a beta-subunit with a hydroxyl group at its C-terminus and an alpha-subunit with a pyruvoyl group at its N-terminus.

It is found in the cytoplasm. It catalyses the reaction L-aspartate + H(+) = beta-alanine + CO2. Its pathway is cofactor biosynthesis; (R)-pantothenate biosynthesis; beta-alanine from L-aspartate: step 1/1. Its function is as follows. Catalyzes the pyruvoyl-dependent decarboxylation of aspartate to produce beta-alanine. This chain is Aspartate 1-decarboxylase, found in Legionella pneumophila subsp. pneumophila (strain Philadelphia 1 / ATCC 33152 / DSM 7513).